Reading from the N-terminus, the 507-residue chain is Glycerol kinase 2 (507 aa).

Residue threonine 16 participates in ADP binding. Threonine 16, threonine 17, and serine 18 together coordinate ATP. Sn-glycerol 3-phosphate is bound at residue threonine 16. Arginine 20 is a binding site for ADP. Sn-glycerol 3-phosphate is bound by residues arginine 86, glutamate 87, tyrosine 138, and aspartate 248. Residues arginine 86, glutamate 87, tyrosine 138, aspartate 248, and glutamine 249 each contribute to the glycerol site. Threonine 270 and glycine 314 together coordinate ADP. ATP contacts are provided by threonine 270, glycine 314, glutamine 318, and glycine 415. The ADP site is built by glycine 415 and asparagine 419.

Belongs to the FGGY kinase family.

It carries out the reaction glycerol + ATP = sn-glycerol 3-phosphate + ADP + H(+). Its pathway is polyol metabolism; glycerol degradation via glycerol kinase pathway; sn-glycerol 3-phosphate from glycerol: step 1/1. Its activity is regulated as follows. Inhibited by fructose 1,6-bisphosphate (FBP). Key enzyme in the regulation of glycerol uptake and metabolism. Catalyzes the phosphorylation of glycerol to yield sn-glycerol 3-phosphate. This Streptomyces avermitilis (strain ATCC 31267 / DSM 46492 / JCM 5070 / NBRC 14893 / NCIMB 12804 / NRRL 8165 / MA-4680) protein is Glycerol kinase 2.